Reading from the N-terminus, the 189-residue chain is Apolipoprotein D (189 aa).

An N-terminal signal peptide occupies residues 1 to 21; it reads MAPTLLLLLPALAGLISVAQG. Glutamine 22 carries the pyrrolidone carboxylic acid modification. Intrachain disulfides connect cysteine 29–cysteine 135 and cysteine 62–cysteine 186. Residues asparagine 66 and asparagine 99 are each glycosylated (N-linked (GlcNAc...) asparagine).

It belongs to the calycin superfamily. Lipocalin family. As to quaternary structure, homodimer. As to expression, most heavily expressed in adrenal gland, lung, brain, testis and spleen.

It is found in the secreted. Its function is as follows. APOD occurs in the macromolecular complex with lecithin-transport and binding of bilin. Appears to be able to transport a variety of ligands in a number of different contexts. This Oryctolagus cuniculus (Rabbit) protein is Apolipoprotein D (APOD).